Reading from the N-terminus, the 530-residue chain is Pancreatic secretory granule membrane major glycoprotein GP2 (530 aa).

Residues 1–21 (MVACDLLWLAAASCLLTLVFP) form the signal peptide. A glycan (N-linked (GlcNAc...) asparagine) is linked at Asn33. Cystine bridges form between Cys41-Cys52, Cys56-Cys150, Cys78-Cys168, Cys100-Cys138, Cys106-Cys173, Cys131-Cys139, Cys183-Cys193, Cys187-Cys202, Cys204-Cys234, Cys222-Cys313, and Cys254-Cys277. The tract at residues 54–74 (DPCQNHTVLNDPSRSTENTVS) is D10C. Residues Asn58 and Asn127 are each glycosylated (N-linked (GlcNAc...) asparagine). An EGF-like domain is found at 179–223 (APKKCEIACRPEEECVFQNNSWTCVCRQDLNVSDTLSLQPLLDCG). Residues Asn197 and Asn209 are each glycosylated (N-linked (GlcNAc...) asparagine). The interval 221–314 (DCGANEIKVK…FLVNVNFQCA (94 aa)) is ZP-N. The 257-residue stretch at 221-477 (DCGANEIKVK…PSCSTSRLRS (257 aa)) folds into the ZP domain. Asn284 and Asn320 each carry an N-linked (GlcNAc...) asparagine glycan. Positions 315 to 338 (YPLDMNVSLQTALQPIVSSLNVDV) are flexible ZP-N/ZP-C linker. The segment at 339 to 350 (GGAGEFTVTMAL) is internal hydrophobic patch (IHP). The ZP-C stretch occupies residues 339-477 (GGAGEFTVTM…PSCSTSRLRS (139 aa)). 3 disulfides stabilise this stretch: Cys394/Cys454, Cys415/Cys470, and Cys459/Cys466. The external hydrophobic patch (EHP) stretch occupies residues 484-492 (LTRVLDIGP). The GPI-anchor amidated asparagine moiety is linked to residue Asn505. Positions 506-530 (GTPRNTGFLLAWPTFFLPVFLAWLF) are cleaved as a propeptide — removed in mature form.

In terms of assembly, interacts with SYCN. Interacts with bacterial adhesin fimH. Post-translationally, N-glycosylated. As to expression, expressed in pancreas.

The protein localises to the zymogen granule membrane. The protein resides in the secreted. It is found in the cell membrane. Its subcellular location is the apical cell membrane. It localises to the membrane raft. The protein localises to the endosome. In terms of biological role, functions as an intestinal M-cell transcytotic receptor specific of type-I-piliated bacteria that participates in the mucosal immune response toward these bacteria. At the apical membrane of M-cells it binds fimH, a protein of the bacteria type I pilus tip. Internalizes bound bacteria, like E.coli and S.typhimurium, from the lumen of the intestine and delivers them, through M-cells, to the underlying organized lymphoid follicles where they are captured by antigen-presenting dendritic cells to elicit a mucosal immune response. The protein is Pancreatic secretory granule membrane major glycoprotein GP2 of Rattus norvegicus (Rat).